The primary structure comprises 401 residues: Methionine import ATP-binding protein MetN (401 aa).

The region spanning 6-248 is the ABC transporter domain; that stretch reads ITFDHVVKEF…PQQPVTKRFI (243 aa). 45-52 contacts ATP; it reads GYSGAGKS.

Belongs to the ABC transporter superfamily. Methionine importer (TC 3.A.1.24) family. In terms of assembly, the complex is composed of two ATP-binding proteins (MetN), two transmembrane proteins (MetI) and a solute-binding protein (MetQ).

Its subcellular location is the cell membrane. The catalysed reaction is L-methionine(out) + ATP + H2O = L-methionine(in) + ADP + phosphate + H(+). The enzyme catalyses D-methionine(out) + ATP + H2O = D-methionine(in) + ADP + phosphate + H(+). Functionally, part of the ABC transporter complex MetNIQ involved in methionine import. Responsible for energy coupling to the transport system. This chain is Methionine import ATP-binding protein MetN, found in Bifidobacterium longum (strain NCC 2705).